Consider the following 1859-residue polypeptide: Retinitis pigmentosa 1-like 1 protein (1859 aa).

Disordered regions lie at residues 1–22 (MNSTPGDTRDAPAPSHPAPSHR) and 115–154 (RKPPKTSREPGRLQRKSPSAGQAQVFQGGHEAPETSYSWK). The 85-residue stretch at 42 to 126 (KKITFLKRGD…PPKTSREPGR (85 aa)) folds into the Doublecortin 1 domain. Basic and acidic residues predominate over residues 115–126 (RKPPKTSREPGR). Polar residues predominate over residues 130 to 139 (KSPSAGQAQV). The 80-residue stretch at 160–239 (RRLTLVKNGD…NEAFRCLEME (80 aa)) folds into the Doublecortin 2 domain. Disordered regions lie at residues 263–301 (PNAKQSVIHSRGRSGGKLRQVSLTSERSGLSDHPASGHR), 426–445 (IWRNPLATPEGTGPTPRRRW), 457–593 (WRQE…TQSH), 700–750 (MPQE…TSKA), 868–920 (CFGR…TPSA), 952–997 (NTEV…GVLS), 1152–1211 (TEDF…YPEL), 1227–1255 (ATGGEETGKGGRKQTWGNAPEQSVHSTML), 1298–1350 (GSQD…RVRE), and 1567–1859 (LQSK…DLDF). Basic and acidic residues predominate over residues 457–472 (WRQEANHRKGHDKDNL). 2 stretches are compositionally biased toward polar residues: residues 499-512 (GSDTLHPVSSASSH) and 535-551 (PETQSTERALSDTSVSA). Over residues 716 to 728 (SPSNSPSAGNQAS) the composition is skewed to low complexity. A compositionally biased stretch (polar residues) spans 734-750 (PFSSSLDLQEPQATSKA). Residues 870–883 (GRESASNGSTSSGH) show a composition bias toward low complexity. Composition is skewed to polar residues over residues 1241–1252 (TWGNAPEQSVHS), 1336–1345 (ESPQHFSESN), and 1567–1577 (LQSKKGGSSNR). A compositionally biased stretch (basic and acidic residues) spans 1616-1632 (GEGKQRLRAEEDPEILK). A compositionally biased stretch (acidic residues) spans 1641–1652 (PEEDEATEEDGE). A compositionally biased stretch (basic and acidic residues) spans 1700–1720 (EASRERQQEVEGRHQDVKEDS). Polar residues predominate over residues 1756 to 1778 (SHHTACSSRALSLDNSSQVSQKG).

In terms of assembly, interacts with RP1; has a synergistic effect with RP1 in photoreceptor differentiation. In terms of tissue distribution, retinal-specific; expressed in photoreceptor.

The protein resides in the cytoplasm. It localises to the cytoskeleton. Its subcellular location is the cilium axoneme. The protein localises to the cell projection. It is found in the cilium. The protein resides in the photoreceptor outer segment. Its function is as follows. Required for the differentiation of photoreceptor cells. Plays a role in the organization of outer segment of rod and cone photoreceptors. This Mus musculus (Mouse) protein is Retinitis pigmentosa 1-like 1 protein (Rp1l1).